Here is a 20-residue protein sequence, read N- to C-terminus: Antifungal protein (20 aa).

The protein belongs to the protease inhibitor I3 (leguminous Kunitz-type inhibitor) family.

In terms of biological role, inhibits soybean trypsin. Has antifungal activity against R.cerealis, A.brassicae and A.niger, and weak antifungal activity against F.oxysporum. The chain is Antifungal protein from Cullen corylifolium (Malaysian scurfpea).